The sequence spans 466 residues: Glycine--tRNA ligase (466 aa).

Positions 104 and 178 each coordinate substrate. ATP is bound by residues 210–212 (RNE), 220–225 (FRTREF), 294–295 (EL), and 338–341 (GADR). 225–229 (FEQME) contributes to the substrate binding site. Substrate is bound at residue 334-338 (EPSLG).

It belongs to the class-II aminoacyl-tRNA synthetase family. As to quaternary structure, homodimer.

It localises to the cytoplasm. The enzyme catalyses tRNA(Gly) + glycine + ATP = glycyl-tRNA(Gly) + AMP + diphosphate. Functionally, catalyzes the attachment of glycine to tRNA(Gly). The polypeptide is Glycine--tRNA ligase (Geobacillus thermodenitrificans (strain NG80-2)).